Reading from the N-terminus, the 80-residue chain is Acyl carrier protein (80 aa).

In terms of domain architecture, Carrier spans 4 to 79; it reads EEILQKVCSI…DAVKFIEEKK (76 aa). Serine 39 bears the O-(pantetheine 4'-phosphoryl)serine mark.

It belongs to the acyl carrier protein (ACP) family. In terms of processing, 4'-phosphopantetheine is transferred from CoA to a specific serine of apo-ACP by AcpS. This modification is essential for activity because fatty acids are bound in thioester linkage to the sulfhydryl of the prosthetic group.

The protein resides in the cytoplasm. It functions in the pathway lipid metabolism; fatty acid biosynthesis. Its function is as follows. Carrier of the growing fatty acid chain in fatty acid biosynthesis. In Prochlorococcus marinus subsp. pastoris (strain CCMP1986 / NIES-2087 / MED4), this protein is Acyl carrier protein.